Consider the following 357-residue polypeptide: UDP-N-acetylglucosamine--N-acetylmuramyl-(pentapeptide) pyrophosphoryl-undecaprenol N-acetylglucosamine transferase (357 aa).

UDP-N-acetyl-alpha-D-glucosamine-binding positions include 15–17, Asn125, Ser190, and Gln290; that span reads SGG.

Belongs to the glycosyltransferase 28 family. MurG subfamily.

Its subcellular location is the cell inner membrane. The catalysed reaction is di-trans,octa-cis-undecaprenyl diphospho-N-acetyl-alpha-D-muramoyl-L-alanyl-D-glutamyl-meso-2,6-diaminopimeloyl-D-alanyl-D-alanine + UDP-N-acetyl-alpha-D-glucosamine = di-trans,octa-cis-undecaprenyl diphospho-[N-acetyl-alpha-D-glucosaminyl-(1-&gt;4)]-N-acetyl-alpha-D-muramoyl-L-alanyl-D-glutamyl-meso-2,6-diaminopimeloyl-D-alanyl-D-alanine + UDP + H(+). It functions in the pathway cell wall biogenesis; peptidoglycan biosynthesis. In terms of biological role, cell wall formation. Catalyzes the transfer of a GlcNAc subunit on undecaprenyl-pyrophosphoryl-MurNAc-pentapeptide (lipid intermediate I) to form undecaprenyl-pyrophosphoryl-MurNAc-(pentapeptide)GlcNAc (lipid intermediate II). This is UDP-N-acetylglucosamine--N-acetylmuramyl-(pentapeptide) pyrophosphoryl-undecaprenol N-acetylglucosamine transferase from Chlamydia pneumoniae (Chlamydophila pneumoniae).